Reading from the N-terminus, the 311-residue chain is Sulfate adenylyltransferase subunit 2 (311 aa).

Belongs to the PAPS reductase family. CysD subfamily. As to quaternary structure, heterodimer composed of CysD, the smaller subunit, and CysN.

It carries out the reaction sulfate + ATP + H(+) = adenosine 5'-phosphosulfate + diphosphate. Its pathway is sulfur metabolism; hydrogen sulfide biosynthesis; sulfite from sulfate: step 1/3. Functionally, with CysN forms the ATP sulfurylase (ATPS) that catalyzes the adenylation of sulfate producing adenosine 5'-phosphosulfate (APS) and diphosphate, the first enzymatic step in sulfur assimilation pathway. APS synthesis involves the formation of a high-energy phosphoric-sulfuric acid anhydride bond driven by GTP hydrolysis by CysN coupled to ATP hydrolysis by CysD. The chain is Sulfate adenylyltransferase subunit 2 from Caulobacter vibrioides (strain ATCC 19089 / CIP 103742 / CB 15) (Caulobacter crescentus).